A 438-amino-acid polypeptide reads, in one-letter code: Ribosomal protein uS12 methylthiotransferase RimO (438 aa).

The region spanning 5-115 (PRVGFVSLGC…VMSAVHTHLP (111 aa)) is the MTTase N-terminal domain. Residues cysteine 14, cysteine 50, cysteine 79, cysteine 146, cysteine 150, and cysteine 153 each contribute to the [4Fe-4S] cluster site. Residues 132–369 (LTPKHYAYLK…MAVQAEISAR (238 aa)) form the Radical SAM core domain. In terms of domain architecture, TRAM spans 372–438 (ERRVGQTLQV…SEHDLWGERR (67 aa)).

This sequence belongs to the methylthiotransferase family. RimO subfamily. Requires [4Fe-4S] cluster as cofactor.

The protein localises to the cytoplasm. The enzyme catalyses L-aspartate(89)-[ribosomal protein uS12]-hydrogen + (sulfur carrier)-SH + AH2 + 2 S-adenosyl-L-methionine = 3-methylsulfanyl-L-aspartate(89)-[ribosomal protein uS12]-hydrogen + (sulfur carrier)-H + 5'-deoxyadenosine + L-methionine + A + S-adenosyl-L-homocysteine + 2 H(+). Its function is as follows. Catalyzes the methylthiolation of an aspartic acid residue of ribosomal protein uS12. The polypeptide is Ribosomal protein uS12 methylthiotransferase RimO (Chromobacterium violaceum (strain ATCC 12472 / DSM 30191 / JCM 1249 / CCUG 213 / NBRC 12614 / NCIMB 9131 / NCTC 9757 / MK)).